Consider the following 476-residue polypeptide: DnaJ homolog subfamily C member 7 homolog (476 aa).

The tract at residues 1–22 is disordered; that stretch reads MTEVETTHMNAGTESQQEPAEL. Over residues 7–18 the composition is skewed to polar residues; the sequence is THMNAGTESQQE. TPR repeat units follow at residues 23–56, 59–92, 143–176, 177–210, 223–256, 261–294, and 295–328; these read AEKQ…GSDS, AIYY…KPDV, MSWM…NPKN, VEAL…DPDC, LENT…DPDN, AKLY…DSSY, and LKGL…DASD. The region spanning 349-414 is the J domain; sequence DHYKILGVSK…ESRRRFDSGV (66 aa).

Its subcellular location is the cytoplasm. This Schizosaccharomyces pombe (strain 972 / ATCC 24843) (Fission yeast) protein is DnaJ homolog subfamily C member 7 homolog.